A 777-amino-acid chain; its full sequence is Ral guanine nucleotide dissociation stimulator-like 2 (777 aa).

Residues 1-54 (MLPRPLRLLLDTSPPGGVVLSSFRSRDPEEGGGPGGLVVGGGQEEEEEEEEEAP) are disordered. A Phosphoserine modification is found at Ser13. Gly residues predominate over residues 31–42 (GGGPGGLVVGGG). Residues 43-54 (QEEEEEEEEEAP) are compositionally biased toward acidic residues. One can recognise an N-terminal Ras-GEF domain in the interval 88-212 (SSRRLRAGTL…GSADLIRNLR (125 aa)). The Ras-GEF domain maps to 243 to 513 (LADHLAEQLT…HRVSCEVEPP (271 aa)). Ser409 is subject to Phosphoserine. Low complexity-rich tracts occupy residues 581–610 (SLDS…SPRP) and 618–632 (ASCG…EEAS). 2 disordered regions span residues 581–644 (SLDS…GSGP) and 734–766 (RRSS…PRIK). Gly residues predominate over residues 633–644 (GGTGYGGEGSGP). One can recognise a Ras-associating domain in the interval 648-735 (DCRIIRVQME…HDFLLRQRRR (88 aa)). Low complexity predominate over residues 740 to 755 (TPGVTSGPSASGTPPS).

Interacts with SAMD9.

In terms of biological role, probable guanine nucleotide exchange factor. Putative effector of Ras and/or Rap. Associates with the GTP-bound form of Rap 1A and H-Ras in vitro. This is Ral guanine nucleotide dissociation stimulator-like 2 (RGL2) from Homo sapiens (Human).